We begin with the raw amino-acid sequence, 1367 residues long: MTSTSPKSRKSSSKRKGSKKKAARSKNVIPPLSKTPPSFRNCVVDKKSLKQLVAWAFKNHGTAVTAAMADNLKDLGFKYATQAAVSISVDDLKVPEAKQDLLGQAEEQITATEECYRLGEITEVERHTKVIDTWTETNERLVDAVKKNFNHNDPLNSVWMMANSGARGNMSQVRQLVGMRGLMANPQGEIIDLPIRTNFREGLTVTEYVISSYGARKGLVDTALRTADSGYLTRRLVDVAQDVIVREEDCGTTRAILINAEDGRFGNRLVGRLVAEDIVDQEDAVIAKRDTAIDPELSKKIEKANVNGVMIRSPLTCEATRSVCRKCYGWALAHNQLVDLGEAVGIIAAQSIGEPGTQLTMRTFHTGGVSTAETGVVRSNLAGKVEFGPKARVRGYRTPHGVEAQQAEVDFLLHIKPTEKGKGQKVEISSGSLIFVEDGQEVDADVTLAQIAAGAIKKSVEKATKDVICDLAGQVRYEEAIQPKEVTDRQGNITLKAQRLGRLWVLAGDVYNLPPNAKPVIASNANVQAGKVLAEASQSSEFGGEVRLRDSIGDSREVQIVTTSMTLKDYNLLEESNHSGEIWNLEANDGTRYRINSIPGSKIGNNEVIAELSDDRFRTKTGGLVKYAPGLAIKKARSAKNGFEVSNGGSLLWIPQETHEINKDISLLMIQDRQWIEAGTEVVKDIFSQTAGIVTVTQKNDILREIIVRSGEFHLCTDSNILERFDNEGQIVNPGETIAKGIKPEAMVFVQTIETTEGKGVLLRPVEEYTIPDKAQLPELSHVTQQQGPSLGLKATQRLGYKDGELIKSVEGVELLKTQLILETFDTTPQMTVDVEVTEDQSTKTIQRLRLVILESILVRRDTISDSSHGSTHTELQVKDQQIVKAGDIVATTQILCKEKGIVQLPEMKEDEPIRRLIVERQEDTVTLTAASKPVVKIGQRVIDGDLLSNEEPINCCGEIEAIKENKVTLRLGRPYMVSPDSVLHVKNGDLVQRGDGLALLVFERQKTGDIVQGLPRIEELLEARRPRDSAILCKRRGIVEINQGDDDDSVVVKVIESDDLIEEYPILLGKNVMISDGQEVKAGELLTDGPVNPHELLECFFGDLRDRKPLMEAAQEAIAKLQHRLVTEVQNVYKSQGVAIDDKHIEVIVRQMTSKVRIEDAGDTTLLPGELIEIRQVEDTNQAISITGGAPAEFTPVLLGITKASLNTDSFISAASFQETTRVLTEAAIEGKSDWLRGLKENVIIGRLIPAGTGFSGFVEELRAEAGPHPDILAEDPAGYRRIQNLRPDYTVEMPSSPAAANLTSVLDDPSDADLEATRNRHGIDPSTSNFAAFARPSGDDNFQEDQSPDPAALEGLQEEGLLSDE.

The interval M1–K34 is disordered. A compositionally biased stretch (basic residues) spans K7–R24. Zn(2+) contacts are provided by C250, C317, C324, and C327. Positions S1306–E1367 are disordered. The segment covering L1355–E1367 has biased composition (low complexity).

This sequence belongs to the RNA polymerase beta' chain family. RpoC2 subfamily. In terms of assembly, in cyanobacteria the RNAP catalytic core is composed of 2 alpha, 1 beta, 1 beta', 1 gamma and 1 omega subunit. When a sigma factor is associated with the core the holoenzyme is formed, which can initiate transcription. Zn(2+) is required as a cofactor.

It carries out the reaction RNA(n) + a ribonucleoside 5'-triphosphate = RNA(n+1) + diphosphate. In terms of biological role, DNA-dependent RNA polymerase catalyzes the transcription of DNA into RNA using the four ribonucleoside triphosphates as substrates. In Prochlorococcus marinus (strain SARG / CCMP1375 / SS120), this protein is DNA-directed RNA polymerase subunit beta'.